The sequence spans 286 residues: Pantothenate synthetase (286 aa).

30–37 (MGFLHEGH) contacts ATP. H37 serves as the catalytic Proton donor. Residue Q61 coordinates (R)-pantoate. Beta-alanine is bound at residue Q61. 147-150 (GLKD) lines the ATP pocket. Position 153 (Q153) interacts with (R)-pantoate. ATP is bound by residues V176 and 184 to 187 (KSSR).

It belongs to the pantothenate synthetase family. As to quaternary structure, homodimer.

The protein resides in the cytoplasm. The catalysed reaction is (R)-pantoate + beta-alanine + ATP = (R)-pantothenate + AMP + diphosphate + H(+). The protein operates within cofactor biosynthesis; (R)-pantothenate biosynthesis; (R)-pantothenate from (R)-pantoate and beta-alanine: step 1/1. Functionally, catalyzes the condensation of pantoate with beta-alanine in an ATP-dependent reaction via a pantoyl-adenylate intermediate. The protein is Pantothenate synthetase of Bacillus subtilis (strain 168).